The sequence spans 89 residues: Putative defensin-like protein 40 (89 aa).

Residues 1-26 form the signal peptide; that stretch reads MAGIANGVGLLISFMLICGGMPKGHA. 4 disulfide bridges follow: C33–C88, C46–C69, C55–C81, and C59–C83.

Belongs to the DEFL family.

Its subcellular location is the secreted. This Arabidopsis thaliana (Mouse-ear cress) protein is Putative defensin-like protein 40.